The sequence spans 474 residues: Viral protein TPX (474 aa).

The interval 268–474 is disordered; it reads VTVTPISSPS…TPTSTTSSNI (207 aa). A compositionally biased stretch (pro residues) spans 275–365; the sequence is SPSPTPTPTP…PTPTPTPTPT (91 aa). One copy of the Thr-Pro(N) repeat lies at 278-367; sequence PTPTPTPTPT…PTPTPTPTPT (90 aa). The tract at residues 278–467 is 3 Thr-Pro repeats regions and two near identical repeats; sequence PTPTPTPTPT…PTPTPTPTPT (190 aa). Residues 368-377 constitute a repeat; that stretch reads YDITYVVFDV. Residues 378–436 form a Thr-Pro(N) repeat; the sequence is TPSPTPTPTPTPTPTPTPTPTPTPTPTPTPTPTPTPTPTPTPTPTPTPTPTPTPTPTPT. Pro residues predominate over residues 380-434; the sequence is SPTPTPTPTPTPTPTPTPTPTPTPTPTPTPTPTPTPTPTPTPTPTPTPTPTPTPT. The stretch at residues 437–446 is a repeat; that stretch reads YDITYVIFDV. The Thr-Pro(N) repeat unit spans residues 447–467; that stretch reads TPSPTPTPTPTPTPTPTPTPT. The span at 449 to 465 shows a compositional bias: pro residues; the sequence is SPTPTPTPTPTPTPTPT.

The sequence is that of Viral protein TPX from Thermoproteus tenax virus 1 (strain VT3) (TTV1).